A 166-amino-acid chain; its full sequence is Glutamyl-tRNA(Gln) amidotransferase subunit C-2, mitochondrial (166 aa).

The protein belongs to the GatC family. Subunit of the heterotrimeric GatCAB amidotransferase (AdT) complex, composed of A, B and C subunits.

It is found in the mitochondrion. It catalyses the reaction L-glutamyl-tRNA(Gln) + L-glutamine + ATP + H2O = L-glutaminyl-tRNA(Gln) + L-glutamate + ADP + phosphate + H(+). Allows the formation of correctly charged Gln-tRNA(Gln) through the transamidation of misacylated Glu-tRNA(Gln) in the mitochondria. The reaction takes place in the presence of glutamine and ATP through an activated gamma-phospho-Glu-tRNA(Gln). The protein is Glutamyl-tRNA(Gln) amidotransferase subunit C-2, mitochondrial of Culex quinquefasciatus (Southern house mosquito).